Consider the following 328-residue polypeptide: MISIERLSKTYPQGGLPMVALEEVSLEIPTGSVFGIVGRSGAGKSTLIRCLNLLERPTSGRIQVDGRELTTLSDRELRLQRQNIGMIFQNFHLLHSRNVWDNIAVGLEIIGMPKAQRQQRVAELLDLVGLSDKAYAFPSQLSGGQKQRVGIARALAAKPSYLLSDEATSALDPETTASILALLSDINRQLGLTIVLITHELDVVKSICDNAALLETGRVVETGAIADLLSDPLSRLGRSLLPTCGPLSVSATPRAELTFFDTLAASPVLSALAQQHAVGVTLLGGGVEFIGGQRVGRLHVDFNRPEGGLNLAEVLQFLNDRGVRAELI.

The ABC transporter domain occupies 2–241; sequence ISIERLSKTY…PLSRLGRSLL (240 aa). 38–45 serves as a coordination point for ATP; the sequence is GRSGAGKS.

The protein belongs to the ABC transporter superfamily. Methionine importer (TC 3.A.1.24) family. As to quaternary structure, the complex is composed of two ATP-binding proteins (MetN), two transmembrane proteins (MetI) and a solute-binding protein (MetQ).

It is found in the cell inner membrane. The catalysed reaction is L-methionine(out) + ATP + H2O = L-methionine(in) + ADP + phosphate + H(+). It catalyses the reaction D-methionine(out) + ATP + H2O = D-methionine(in) + ADP + phosphate + H(+). In terms of biological role, part of the ABC transporter complex MetNIQ involved in methionine import. Responsible for energy coupling to the transport system. This is Methionine import ATP-binding protein MetN 1 from Yersinia pestis bv. Antiqua (strain Nepal516).